Reading from the N-terminus, the 311-residue chain is Methionyl-tRNA formyltransferase (311 aa).

Residue 112–115 (SLLP) participates in (6S)-5,6,7,8-tetrahydrofolate binding.

The protein belongs to the Fmt family.

The catalysed reaction is L-methionyl-tRNA(fMet) + (6R)-10-formyltetrahydrofolate = N-formyl-L-methionyl-tRNA(fMet) + (6S)-5,6,7,8-tetrahydrofolate + H(+). Attaches a formyl group to the free amino group of methionyl-tRNA(fMet). The formyl group appears to play a dual role in the initiator identity of N-formylmethionyl-tRNA by promoting its recognition by IF2 and preventing the misappropriation of this tRNA by the elongation apparatus. The protein is Methionyl-tRNA formyltransferase of Sinorhizobium medicae (strain WSM419) (Ensifer medicae).